The chain runs to 87 residues: Small ribosomal subunit protein uS17 (87 aa).

It belongs to the universal ribosomal protein uS17 family. Part of the 30S ribosomal subunit.

Its function is as follows. One of the primary rRNA binding proteins, it binds specifically to the 5'-end of 16S ribosomal RNA. The chain is Small ribosomal subunit protein uS17 from Staphylococcus aureus (strain JH1).